A 159-amino-acid polypeptide reads, in one-letter code: MNKQISKKPAQRTIALNKKALHDYYVEQRFEAGLVLEGWEVKSIRAGRVQLRDSYVVFKGGEAWLIGAHLSPLPNVAEYMKADPQRSRKLLLNKPEIGKLFGAVQKQGLTVVPLDLHWHKNHVKVEIALAKGKKTHDKRETIKRREWEREKHRVLKSHG.

The protein belongs to the SmpB family.

It localises to the cytoplasm. In terms of biological role, required for rescue of stalled ribosomes mediated by trans-translation. Binds to transfer-messenger RNA (tmRNA), required for stable association of tmRNA with ribosomes. tmRNA and SmpB together mimic tRNA shape, replacing the anticodon stem-loop with SmpB. tmRNA is encoded by the ssrA gene; the 2 termini fold to resemble tRNA(Ala) and it encodes a 'tag peptide', a short internal open reading frame. During trans-translation Ala-aminoacylated tmRNA acts like a tRNA, entering the A-site of stalled ribosomes, displacing the stalled mRNA. The ribosome then switches to translate the ORF on the tmRNA; the nascent peptide is terminated with the 'tag peptide' encoded by the tmRNA and targeted for degradation. The ribosome is freed to recommence translation, which seems to be the essential function of trans-translation. This Coxiella burnetii (strain RSA 331 / Henzerling II) protein is SsrA-binding protein.